We begin with the raw amino-acid sequence, 187 residues long: Probable RNA 2'-phosphotransferase (187 aa).

It belongs to the KptA/TPT1 family.

In terms of biological role, removes the 2'-phosphate from RNA via an intermediate in which the phosphate is ADP-ribosylated by NAD followed by a presumed transesterification to release the RNA and generate ADP-ribose 1''-2''-cyclic phosphate (APPR&gt;P). May function as an ADP-ribosylase. The chain is Probable RNA 2'-phosphotransferase from Pseudomonas syringae pv. tomato (strain ATCC BAA-871 / DC3000).